The primary structure comprises 184 residues: GMP synthase [glutamine-hydrolyzing] subunit A (184 aa).

Positions 3-184 (PLYVVNNHGQ…FENFDGICSE (182 aa)) constitute a Glutamine amidotransferase type-1 domain. C75 (nucleophile) is an active-site residue. Active-site residues include H162 and E164.

In terms of assembly, heterodimer composed of a glutamine amidotransferase subunit (A) and a GMP-binding subunit (B).

It carries out the reaction XMP + L-glutamine + ATP + H2O = GMP + L-glutamate + AMP + diphosphate + 2 H(+). It functions in the pathway purine metabolism; GMP biosynthesis; GMP from XMP (L-Gln route): step 1/1. Catalyzes the synthesis of GMP from XMP. The sequence is that of GMP synthase [glutamine-hydrolyzing] subunit A from Methanoculleus marisnigri (strain ATCC 35101 / DSM 1498 / JR1).